Consider the following 82-residue polypeptide: MPKRTLQGVVVSDKQAKTVVVRVDRRFTHPIYKKTIRRSKNYHAHDENNEFKPGDVVWIEESKPISKLKRWTVVRGEQKKTA.

It belongs to the universal ribosomal protein uS17 family. Part of the 30S ribosomal subunit.

One of the primary rRNA binding proteins, it binds specifically to the 5'-end of 16S ribosomal RNA. This chain is Small ribosomal subunit protein uS17, found in Rhodopseudomonas palustris (strain BisA53).